Reading from the N-terminus, the 130-residue chain is Small ribosomal subunit protein uS11 (130 aa).

This sequence belongs to the universal ribosomal protein uS11 family. As to quaternary structure, part of the 30S ribosomal subunit. Interacts with proteins S7 and S18. Binds to IF-3.

Located on the platform of the 30S subunit, it bridges several disparate RNA helices of the 16S rRNA. Forms part of the Shine-Dalgarno cleft in the 70S ribosome. In Phytoplasma mali (strain AT), this protein is Small ribosomal subunit protein uS11.